The chain runs to 188 residues: Elongation factor P-like protein (188 aa).

The protein belongs to the elongation factor P family.

In Xylella fastidiosa (strain 9a5c), this protein is Elongation factor P-like protein.